Here is a 522-residue protein sequence, read N- to C-terminus: Lysine--tRNA ligase (522 aa).

Residues 44–52 carry the 'HIGH' region motif; that stretch reads PSGLPHIGT. The 'KMSKS' region motif lies at 290–294; the sequence is KISKS. Residue lysine 293 coordinates ATP.

It belongs to the class-I aminoacyl-tRNA synthetase family.

The protein resides in the cytoplasm. The enzyme catalyses tRNA(Lys) + L-lysine + ATP = L-lysyl-tRNA(Lys) + AMP + diphosphate. The chain is Lysine--tRNA ligase from Rickettsia peacockii (strain Rustic).